We begin with the raw amino-acid sequence, 238 residues long: Small ribosomal subunit protein uS3 (238 aa).

The 69-residue stretch at 39–107 (MREFIHDYAK…ELHLNIVEIR (69 aa)) folds into the KH type-2 domain. A compositionally biased stretch (basic and acidic residues) spans 212-222 (PQAHDRRHSEA). The interval 212 to 238 (PQAHDRRHSEAQEGAAPRPPRRDRERA) is disordered.

The protein belongs to the universal ribosomal protein uS3 family. As to quaternary structure, part of the 30S ribosomal subunit. Forms a tight complex with proteins S10 and S14.

Binds the lower part of the 30S subunit head. Binds mRNA in the 70S ribosome, positioning it for translation. The polypeptide is Small ribosomal subunit protein uS3 (Cereibacter sphaeroides (strain ATCC 17029 / ATH 2.4.9) (Rhodobacter sphaeroides)).